We begin with the raw amino-acid sequence, 131 residues long: D-ribose pyranase (131 aa).

The Proton donor role is filled by His20. Substrate contacts are provided by residues Asp28, His98, and 120-122; that span reads YAN.

This sequence belongs to the RbsD / FucU family. RbsD subfamily. Homodecamer.

Its subcellular location is the cytoplasm. It catalyses the reaction beta-D-ribopyranose = beta-D-ribofuranose. It participates in carbohydrate metabolism; D-ribose degradation; D-ribose 5-phosphate from beta-D-ribopyranose: step 1/2. Catalyzes the interconversion of beta-pyran and beta-furan forms of D-ribose. The sequence is that of D-ribose pyranase from Bacillus cytotoxicus (strain DSM 22905 / CIP 110041 / 391-98 / NVH 391-98).